A 160-amino-acid polypeptide reads, in one-letter code: Phosphopantetheine adenylyltransferase (160 aa).

Residue T10 coordinates substrate. Residues 10–11 (TF) and H18 contribute to the ATP site. The substrate site is built by K42, L74, and R88. Residues 89-91 (GLR), E99, and 124-130 (NSFISST) each bind ATP.

Belongs to the bacterial CoaD family. As to quaternary structure, homohexamer. The cofactor is Mg(2+).

The protein resides in the cytoplasm. It catalyses the reaction (R)-4'-phosphopantetheine + ATP + H(+) = 3'-dephospho-CoA + diphosphate. The protein operates within cofactor biosynthesis; coenzyme A biosynthesis; CoA from (R)-pantothenate: step 4/5. Reversibly transfers an adenylyl group from ATP to 4'-phosphopantetheine, yielding dephospho-CoA (dPCoA) and pyrophosphate. This chain is Phosphopantetheine adenylyltransferase, found in Shewanella piezotolerans (strain WP3 / JCM 13877).